We begin with the raw amino-acid sequence, 116 residues long: Large ribosomal subunit protein uL22 (116 aa).

Belongs to the universal ribosomal protein uL22 family. In terms of assembly, part of the 50S ribosomal subunit.

Functionally, this protein binds specifically to 23S rRNA; its binding is stimulated by other ribosomal proteins, e.g. L4, L17, and L20. It is important during the early stages of 50S assembly. It makes multiple contacts with different domains of the 23S rRNA in the assembled 50S subunit and ribosome. The globular domain of the protein is located near the polypeptide exit tunnel on the outside of the subunit, while an extended beta-hairpin is found that lines the wall of the exit tunnel in the center of the 70S ribosome. This chain is Large ribosomal subunit protein uL22, found in Gloeobacter violaceus (strain ATCC 29082 / PCC 7421).